Here is a 235-residue protein sequence, read N- to C-terminus: MKKAVVVFSGGQDSTTCLVQALSRYDEVHAITFDYGQRHREEIETARRLASQLGIAAHKVMDVTMLGELAISALTRDEIPVSFELQDNGLPNTFVPGRNILFLTLAAIYAYQVGAEAVITGVCETDFSGYPDCRDEFVKALNQAVSLGLDRAIRFETPLMWLDKAETWALADHYGHLDTVRQQTLTCYNGIAGDGCGACPACDLRSRGLQQYLADKAGVAARLHQKTGLGEKSGC.

Residue 8–18 coordinates ATP; sequence FSGGQDSTTCL. 4 residues coordinate Zn(2+): cysteine 187, cysteine 196, cysteine 199, and cysteine 202.

This sequence belongs to the QueC family. The cofactor is Zn(2+).

It carries out the reaction 7-carboxy-7-deazaguanine + NH4(+) + ATP = 7-cyano-7-deazaguanine + ADP + phosphate + H2O + H(+). It participates in purine metabolism; 7-cyano-7-deazaguanine biosynthesis. Catalyzes the ATP-dependent conversion of 7-carboxy-7-deazaguanine (CDG) to 7-cyano-7-deazaguanine (preQ(0)). This chain is 7-cyano-7-deazaguanine synthase, found in Aeromonas hydrophila subsp. hydrophila (strain ATCC 7966 / DSM 30187 / BCRC 13018 / CCUG 14551 / JCM 1027 / KCTC 2358 / NCIMB 9240 / NCTC 8049).